We begin with the raw amino-acid sequence, 398 residues long: Inner membrane protein YjgN (398 aa).

Over Met-1–Tyr-24 the chain is Cytoplasmic. Residues Phe-25–Trp-45 traverse the membrane as a helical segment. At Ala-46 to Asn-73 the chain is on the periplasmic side. The helical transmembrane segment at Val-74–Ala-94 threads the bilayer. Residue Asp-95 is a topological domain, cytoplasmic. Residues Met-96–Ala-116 form a helical membrane-spanning segment. The Periplasmic portion of the chain corresponds to Lys-117 to Val-142. Residues Trp-143 to Ile-163 traverse the membrane as a helical segment. The Cytoplasmic segment spans residues Ser-164–Ser-175. The chain crosses the membrane as a helical span at residues Val-176–Gly-196. The Periplasmic segment spans residues Thr-197 to Lys-228. A helical membrane pass occupies residues Tyr-229–Phe-249. The Cytoplasmic segment spans residues Asp-250–Lys-278. A helical transmembrane segment spans residues Met-279–Val-299. Residues Ser-300–Ala-333 lie on the Periplasmic side of the membrane. Residues Leu-334 to Ile-354 traverse the membrane as a helical segment. Residues Asp-355–Leu-398 are Cytoplasmic-facing.

It localises to the cell inner membrane. This Escherichia coli O157:H7 protein is Inner membrane protein YjgN (yjgN).